A 97-amino-acid chain; its full sequence is Integration host factor subunit alpha (97 aa).

Residues 49–71 (FGNFDLRDKNQRPGRNPKTGEDI) form a disordered region.

The protein belongs to the bacterial histone-like protein family. In terms of assembly, heterodimer of an alpha and a beta chain.

In terms of biological role, this protein is one of the two subunits of integration host factor, a specific DNA-binding protein that functions in genetic recombination as well as in transcriptional and translational control. In Shewanella woodyi (strain ATCC 51908 / MS32), this protein is Integration host factor subunit alpha.